Here is a 432-residue protein sequence, read N- to C-terminus: Adenylosuccinate synthetase (432 aa).

GTP-binding positions include 12 to 18 and 40 to 42; these read GDEGKGK and GHT. D13 serves as the catalytic Proton acceptor. 2 residues coordinate Mg(2+): D13 and G40. Residues 13-16, 38-41, T128, R142, Q223, T238, and R302 contribute to the IMP site; these read DEGK and NAGH. H41 serves as the catalytic Proton donor. Residue 298 to 304 participates in substrate binding; sequence TTTGRPR. Residues R304, 330–332, and 417–419 contribute to the GTP site; these read HLD and GVG.

This sequence belongs to the adenylosuccinate synthetase family. As to quaternary structure, homodimer. Mg(2+) is required as a cofactor.

The protein localises to the cytoplasm. The catalysed reaction is IMP + L-aspartate + GTP = N(6)-(1,2-dicarboxyethyl)-AMP + GDP + phosphate + 2 H(+). The protein operates within purine metabolism; AMP biosynthesis via de novo pathway; AMP from IMP: step 1/2. Plays an important role in the de novo pathway of purine nucleotide biosynthesis. Catalyzes the first committed step in the biosynthesis of AMP from IMP. This is Adenylosuccinate synthetase from Symbiobacterium thermophilum (strain DSM 24528 / JCM 14929 / IAM 14863 / T).